The chain runs to 222 residues: Capsular polysaccharide type 8 biosynthesis protein cap8A (222 aa).

2 helical membrane-spanning segments follow: residues Ile-20 to Leu-40 and Val-172 to Phe-192.

Belongs to the CpsC/CapA family.

The protein localises to the cell membrane. Required for the biosynthesis of type 8 capsular polysaccharide (Cap8/CP8). Might act as the chain-length regulator. The sequence is that of Capsular polysaccharide type 8 biosynthesis protein cap8A (cap8A) from Staphylococcus aureus.